The primary structure comprises 20 residues: Brevinin-1DYc (20 aa).

An intrachain disulfide couples Cys-14 to Cys-20.

In terms of tissue distribution, expressed by the skin glands.

The protein resides in the secreted. Antimicrobial peptide. Has low activity against the Gram-positive bacterium S.aureus and the Gram-negative bacterium E.coli (MIC&lt;15 uM). Has a strong hemolytic activity. The polypeptide is Brevinin-1DYc (Rana dybowskii (Dybovsky's frog)).